Reading from the N-terminus, the 878-residue chain is Longitudinals lacking protein, isoforms N/O/W/X/Y (878 aa).

The region spanning 32–97 (VDCTLAAEGK…MYRGEVNISQ (66 aa)) is the BTB domain. 3 disordered regions span residues 115–200 (LSDN…SSVL), 228–340 (SSGP…ASAS), and 542–583 (QIVK…QTHA). Low complexity-rich tracts occupy residues 162–175 (SGDV…SSSP), 228–251 (SSGP…LTST), 263–293 (TSST…QTTS), 329–340 (NSATGPNPASAS), and 546–569 (QQHQ…QQQQ). Residues 709–731 (YACNVCGKTYKIKGSLKRHKNYE) form a C2H2-type 1; degenerate zinc finger. The C2H2-type 2 zinc-finger motif lies at 794-816 (FQCDFCLKWFKRRSHLNRHKKLH). The tract at residues 826–863 (SKQKPKTTSGQNLSHDANTDDEVATTNPAATEDESNYP) is disordered. Residues 831 to 841 (KTTSGQNLSHD) show a composition bias toward polar residues.

By stage 11, isoform W, isoform X and isoform Y are expressed throughout the mesoderm, whereas isoform O is expressed in both mesoderm and ectoderm. From stage 15, expression of isoform O expands to all tissues, whereas expression of isoform W, isoform X and isoform Y becomes restricted during later stages; starting from stage 14 to 16, isoform W, isoform X and isoform Y are expressed in muscle. From stages 14 and 15, isoform W and isoform Y are expressed in the gut. For some isoforms, expression is also seen in specific types of cells in the embryo; isoform O is expressed in the ventral furrow at stage 5 and in the dorsal epidermis from stage 7. Isoform Y shows prominent expression in the gonad starting at stage 15.

It localises to the nucleus. In terms of biological role, putative transcription factor required for axon growth and guidance in the central and peripheral nervous systems. Repels CNS axons away from the midline by promoting the expression of the midline repellent sli and its receptor robo. This is Longitudinals lacking protein, isoforms N/O/W/X/Y from Drosophila melanogaster (Fruit fly).